Here is a 329-residue protein sequence, read N- to C-terminus: Glycerol-3-phosphate dehydrogenase [NAD(P)+] (329 aa).

3 residues coordinate NADPH: Y14, R34, and K108. Sn-glycerol 3-phosphate is bound by residues K108, G137, and S139. A141 is a binding site for NADPH. Sn-glycerol 3-phosphate is bound by residues K192, D245, S255, R256, and N257. K192 serves as the catalytic Proton acceptor. R256 contacts NADPH. Residues I280 and E282 each contribute to the NADPH site.

It belongs to the NAD-dependent glycerol-3-phosphate dehydrogenase family.

Its subcellular location is the cytoplasm. It catalyses the reaction sn-glycerol 3-phosphate + NAD(+) = dihydroxyacetone phosphate + NADH + H(+). It carries out the reaction sn-glycerol 3-phosphate + NADP(+) = dihydroxyacetone phosphate + NADPH + H(+). It participates in membrane lipid metabolism; glycerophospholipid metabolism. Functionally, catalyzes the reduction of the glycolytic intermediate dihydroxyacetone phosphate (DHAP) to sn-glycerol 3-phosphate (G3P), the key precursor for phospholipid synthesis. This is Glycerol-3-phosphate dehydrogenase [NAD(P)+] from Wigglesworthia glossinidia brevipalpis.